The sequence spans 542 residues: CTP synthase (542 aa).

An amidoligase domain region spans residues 1–265 (MARYVFITGG…DDEVLAAFGI (265 aa)). Ser13 is a binding site for CTP. Ser13 contributes to the UTP binding site. ATP is bound by residues 14–19 (SLGKGI) and Asp71. Residues Asp71 and Glu139 each contribute to the Mg(2+) site. CTP is bound by residues 146 to 148 (DIE), 186 to 191 (KTKPTQ), and Lys222. UTP contacts are provided by residues 186–191 (KTKPTQ) and Lys222. Residues 291 to 541 (TIAIVGKYTG…IEAATEQSRL (251 aa)) form the Glutamine amidotransferase type-1 domain. Gly353 provides a ligand contact to L-glutamine. The active-site Nucleophile; for glutamine hydrolysis is Cys380. L-glutamine-binding positions include 381 to 384 (FGMQ), Glu404, and Arg469. Active-site residues include His514 and Glu516.

The protein belongs to the CTP synthase family. In terms of assembly, homotetramer.

The enzyme catalyses UTP + L-glutamine + ATP + H2O = CTP + L-glutamate + ADP + phosphate + 2 H(+). It carries out the reaction L-glutamine + H2O = L-glutamate + NH4(+). It catalyses the reaction UTP + NH4(+) + ATP = CTP + ADP + phosphate + 2 H(+). The protein operates within pyrimidine metabolism; CTP biosynthesis via de novo pathway; CTP from UDP: step 2/2. Its activity is regulated as follows. Allosterically activated by GTP, when glutamine is the substrate; GTP has no effect on the reaction when ammonia is the substrate. The allosteric effector GTP functions by stabilizing the protein conformation that binds the tetrahedral intermediate(s) formed during glutamine hydrolysis. Inhibited by the product CTP, via allosteric rather than competitive inhibition. Its function is as follows. Catalyzes the ATP-dependent amination of UTP to CTP with either L-glutamine or ammonia as the source of nitrogen. Regulates intracellular CTP levels through interactions with the four ribonucleotide triphosphates. This is CTP synthase from Rhizobium etli (strain ATCC 51251 / DSM 11541 / JCM 21823 / NBRC 15573 / CFN 42).